The chain runs to 455 residues: Exodeoxyribonuclease 7 large subunit (455 aa).

Belongs to the XseA family. Heterooligomer composed of large and small subunits.

It is found in the cytoplasm. It carries out the reaction Exonucleolytic cleavage in either 5'- to 3'- or 3'- to 5'-direction to yield nucleoside 5'-phosphates.. Its function is as follows. Bidirectionally degrades single-stranded DNA into large acid-insoluble oligonucleotides, which are then degraded further into small acid-soluble oligonucleotides. This chain is Exodeoxyribonuclease 7 large subunit, found in Lactobacillus acidophilus (strain ATCC 700396 / NCK56 / N2 / NCFM).